The following is a 242-amino-acid chain: Putative S-adenosyl-L-methionine-dependent methyltransferase Mmcs_0580 (242 aa).

Residues Asp-104 and 134–135 contribute to the S-adenosyl-L-methionine site; that span reads DL.

It belongs to the UPF0677 family.

Its function is as follows. Exhibits S-adenosyl-L-methionine-dependent methyltransferase activity. The protein is Putative S-adenosyl-L-methionine-dependent methyltransferase Mmcs_0580 of Mycobacterium sp. (strain MCS).